The following is a 250-amino-acid chain: MRRKIVVGNWKMNKTVAESTELASAVVAALGSDCSACEAGIAPTYPALDSVGRTIKGSEVLLVAQNCHYEDDGAFTGEVSTGMLNALGCSYVIIGHSERRQYFGETDATVNLRIKKVLAAGMKAILCVGETLEERESGAFEAVVSTQVTGGLQGVVDISDIVIAYEPVWAIGTGRTASSEQAQEVHKIIRNKVAELYGAPAADAVRIQYGGSVKPSNAAELFAMPDIDGGLIGGAALKAEDFAAIVKAAC.

9–11 (NWK) contributes to the substrate binding site. Histidine 96 functions as the Electrophile in the catalytic mechanism. Glutamate 166 acts as the Proton acceptor in catalysis. Substrate contacts are provided by residues glycine 172, serine 212, and 233–234 (GG).

This sequence belongs to the triosephosphate isomerase family. In terms of assembly, homodimer.

It localises to the cytoplasm. The enzyme catalyses D-glyceraldehyde 3-phosphate = dihydroxyacetone phosphate. The protein operates within carbohydrate biosynthesis; gluconeogenesis. It functions in the pathway carbohydrate degradation; glycolysis; D-glyceraldehyde 3-phosphate from glycerone phosphate: step 1/1. Functionally, involved in the gluconeogenesis. Catalyzes stereospecifically the conversion of dihydroxyacetone phosphate (DHAP) to D-glyceraldehyde-3-phosphate (G3P). The polypeptide is Triosephosphate isomerase (Chlorobium phaeovibrioides (strain DSM 265 / 1930) (Prosthecochloris vibrioformis (strain DSM 265))).